The primary structure comprises 233 residues: Charged multivesicular body protein 4c (233 aa).

Disordered stretches follow at residues 1–24 (MSKLGKFFKGGGSSKSRAAPSPQE) and 173–233 (QEEL…AWAT). Residues 1 to 153 (MSKLGKFFKG…EISEAFSQRV (153 aa)) are intramolecular interaction with C-terminus. Residues 125 to 183 (LNKIDDLMQEITEQQDIAQEISEAFSQRVGFGDDFDEDELMAELEELEQEELNKKMTNI) are a coiled coil. Positions 154-233 (GFGDDFDEDE…DIKQLAAWAT (80 aa)) are intramolecular interaction with N-terminus. Over residues 204–216 (SSTARRSRAASSQ) the composition is skewed to low complexity. Serine 210 carries the phosphoserine; by AURKB modification.

This sequence belongs to the SNF7 family. In terms of assembly, probable core component of the endosomal sorting required for transport complex III (ESCRT-III). ESCRT-III components are thought to multimerize to form a flat lattice on the perimeter membrane of the endosome. Several assembly forms of ESCRT-III may exist that interact and act sequentially. Self-associates. Interacts with CHMP2A. Interacts with CHMP4A. Interacts with CHMP4B. Interacts with CHMP6. Interacts with VPS4A. Interacts with PDCD6IP; the interaction is direct. Phosphorylated at Ser-210 by AURKB during cytokinesis: together with ZFYVE19/ANCHR, phosphorylated CHMP4C retains abscission-competent VPS4 (VPS4A and/or VPS4B) at the midbody ring until abscission checkpoint signaling is terminated at late cytokinesis. Expressed in heart, spleen and kidney.

It localises to the cytoplasm. The protein resides in the cytosol. It is found in the late endosome membrane. The protein localises to the midbody. Its subcellular location is the midbody ring. Functionally, probable core component of the endosomal sorting required for transport complex III (ESCRT-III) which is involved in multivesicular bodies (MVBs) formation and sorting of endosomal cargo proteins into MVBs. MVBs contain intraluminal vesicles (ILVs) that are generated by invagination and scission from the limiting membrane of the endosome and mostly are delivered to lysosomes enabling degradation of membrane proteins, such as stimulated growth factor receptors, lysosomal enzymes and lipids. The MVB pathway appears to require the sequential function of ESCRT-O, -I,-II and -III complexes. ESCRT-III proteins mostly dissociate from the invaginating membrane before the ILV is released. The ESCRT machinery also functions in topologically equivalent membrane fission events, such as the terminal stages of cytokinesis and the budding of enveloped viruses (HIV-1 and other lentiviruses). Key component of the cytokinesis checkpoint, a process required to delay abscission to prevent both premature resolution of intercellular chromosome bridges and accumulation of DNA damage: upon phosphorylation by AURKB, together with ZFYVE19/ANCHR, retains abscission-competent VPS4 (VPS4A and/or VPS4B) at the midbody ring until abscission checkpoint signaling is terminated at late cytokinesis. Deactivation of AURKB results in dephosphorylation of CHMP4C followed by its dissociation from ANCHR and VPS4 and subsequent abscission. ESCRT-III proteins are believed to mediate the necessary vesicle extrusion and/or membrane fission activities, possibly in conjunction with the AAA ATPase VPS4. Involved in HIV-1 p6- and p9-dependent virus release. CHMP4A/B/C are required for the exosomal release of SDCBP, CD63 and syndecan. The chain is Charged multivesicular body protein 4c (CHMP4C) from Homo sapiens (Human).